Consider the following 377-residue polypeptide: MSEEDSDSVITDSQAEEEGELPVIQLCGLVEELSYGNSALKTETEMFEKYYSRLEPRDHRMTRLSDIKITAAEFSQLRSRRKSKARGGLDRTLGLTVEQKLELVQKELEDTRDEIRHMRANAERDLQHHEAIIEEADIRWNEVQKAVHEFEKDILKTISKKKGSILATQKVMKYIEDMNRRRDNIKDKLCLKNVSLKVQRKKMLSQLRQKEEVGEALHDVDFQQLKIENAQFLETIEARNKELIQLKLASGNTLQVLNTYKNKLHRAMEIYVNLDKEILLRNELLGKIEKETIQAEEDRAKAHILNDKLRKQLAEFRAPQVMMYVKEKILNGELEKTIKMWERKVEIAEMSLKGYRKAWNKMKTSDEQLQIIRPPGK.

Coiled-coil stretches lie at residues 95 to 139 (LTVE…ADIR) and 169 to 355 (QKVM…LKGY).

This sequence belongs to the CFAP263 family. As to quaternary structure, forms a complex with CFAP184; the interaction is required for functional activity in cilia. Interacts with HAP1 and PCM1.

The protein resides in the cytoplasm. Its subcellular location is the cytoskeleton. It localises to the microtubule organizing center. It is found in the centrosome. The protein localises to the centriolar satellite. The protein resides in the cell projection. Its subcellular location is the cilium. Functionally, component of centriolar satellites contributing to primary cilium formation. In complex with CFAP263, acts as a regulator of ciliary beating that connects radial spoke 3 (RS3) to the inner dynein arm (IDA) and the nexin-dynein regulatory complex (N-DRC). The complex is positioned parallel to N-DRC and forms a connection between the arch at the base of RS3, the IDA tail and N-DRC. The sequence is that of Cilia- and flagella-associated protein 263 (Cfap263) from Mus musculus (Mouse).